The chain runs to 354 residues: Mitogen-activated protein kinase kinase 1 (354 aa).

The region spanning 68 to 328 (LEVIKVIGKG…AKELLEHKFV (261 aa)) is the Protein kinase domain. ATP contacts are provided by residues 74–82 (IGKGSSGNV) and lysine 97. The active-site Proton acceptor is the aspartate 190. Threonine 218 is modified (phosphothreonine). Phosphoserine is present on serine 224. Threonine 228 carries the phosphothreonine modification.

It belongs to the protein kinase superfamily. STE Ser/Thr protein kinase family. MAP kinase kinase subfamily. Interacts with MEKK1 and MPK4. May form a ternary complex composed of MEKK1 and MKK1/MKK2 and MPK4. Interacts with P.syringae type III effector HopF2. Interacts with MPK11. Phosphorylation at Thr-218 and Ser-224 by MAP kinase kinase kinases positively regulates kinase activity. Expressed in roots, stem, flowers and siliques.

The catalysed reaction is L-seryl-[protein] + ATP = O-phospho-L-seryl-[protein] + ADP + H(+). It catalyses the reaction L-threonyl-[protein] + ATP = O-phospho-L-threonyl-[protein] + ADP + H(+). It carries out the reaction L-tyrosyl-[protein] + ATP = O-phospho-L-tyrosyl-[protein] + ADP + H(+). Its activity is regulated as follows. Activated through serine and threonine phosphorylation in response to wounding, cold, drought, salt stresses, abscisic acid (ABA), hydrogen peroxide, bacterial flagellin and laminarin beta-glucan. Functionally, MEKK1, MKK1/MKK2 and MPK4/MPK6 function in a signaling pathway that modulates the expression of genes responding to biotic and abiotic stresses and also plays an important role in pathogen defense by negatively regulating innate immunity. Activates by phosphorylation the downstream MPK4. Acts redundantly with MKK2. MKK1-MPK6 module mediates abscisic acid (ABA)-dependent CAT1 expression with H(2)O(2) production and response to drought and salt stress. MKK1-MPK6 module is also involved in sugar signaling during the process of seed germination. The polypeptide is Mitogen-activated protein kinase kinase 1 (MKK1) (Arabidopsis thaliana (Mouse-ear cress)).